The following is a 573-amino-acid chain: MAWGHRATVCLVLLGVGLGLVIVVLAAVLSPRQASCGPGAFTRAAVAADSKICSDIGRAILQQRGSPVDAAIAALVCTGVVNPQSMGLGGGVVFTIYNASTGKVEIINARETVPASYDQGLLNQCKNVLPLGTGAQWIGVPGELRGYAEAHRRHGRLPWAQLFQPTIALLREGFRVPFILSQFLNNSILRPHLSASTLRQLFFNGTETLRSQDPFPWPALANTLETVAKEGAEVLYTGRLGRMLVEDIAKQGSLLTVQDLAAFQPEVVEPLEMPLGNYTLYSPPPPAGGAILSFILNVLKGFNFSAETVARPGGEVNMYHHLVETLKFAVGQRWRLWDPSSHPGIQNISRDLLREDLAQRIRQQIDGRGDHHQLSHYNLTGVRGNRMGTSHVSVLGEDGSAVAATSTINTPFGAMVYSPRTGILLNNELLDLCWRHMPTSPITPPPVPGERPPSSMVPSILVNKGQGSKLVIGGAGGELIISAVAQTIMNKLWLGFDLTEAIASPILHVNSKGHVEYEPKFNQEVQKGLQDRGQIQSQSQRPVFLNAVQAVFQEGPCVYAASDLRKAGKASGY.

At 1 to 8 (MAWGHRAT) the chain is on the cytoplasmic side. The chain crosses the membrane as a helical; Signal-anchor for type II membrane protein span at residues 9 to 29 (VCLVLLGVGLGLVIVVLAAVL). Residues 30-573 (SPRQASCGPG…LRKAGKASGY (544 aa)) are Extracellular-facing. Asparagine 98 carries N-linked (GlcNAc...) asparagine glycosylation. Residue arginine 110 participates in L-glutamate binding. N-linked (GlcNAc...) asparagine glycosylation is found at asparagine 185, asparagine 204, asparagine 277, asparagine 303, asparagine 347, and asparagine 378. Threonine 389 (nucleophile) is an active-site residue. L-glutamate contacts are provided by residues threonine 407, glutamate 428, and 454 to 455 (SS).

This sequence belongs to the gamma-glutamyltransferase family. As to quaternary structure, heterodimer composed of the light and heavy chains. The active site is located in the light chain. Post-translationally, cleaved by autocatalysis into a large and a small subunit. Glycosylated. As to expression, very low level of expression. Detected in spleen lymphocytes, medullary and paracortical thymic lymphocytes, lung interstitial cells, bronchial epithelium, proximal tubules in kidney, crypt cells in small intestine, neurons in brain stem and cerebral cortex and in Purkinje cells. In terms of tissue distribution, very low expression.

It localises to the membrane. The catalysed reaction is glutathione + H2O = L-cysteinylglycine + L-glutamate. It catalyses the reaction an S-substituted glutathione + H2O = an S-substituted L-cysteinylglycine + L-glutamate. The enzyme catalyses leukotriene C4 + H2O = leukotriene D4 + L-glutamate. It carries out the reaction S-[(2E,6E,10E)-geranylgeranyl]-L-glutathione + H2O = S-[(2E,6E,10E)-geranylgeranyl]-L-cysteinylglycine + L-glutamate. The catalysed reaction is an N-terminal (5-L-glutamyl)-[peptide] + an alpha-amino acid = 5-L-glutamyl amino acid + an N-terminal L-alpha-aminoacyl-[peptide]. It functions in the pathway lipid metabolism; leukotriene D4 biosynthesis. The protein operates within sulfur metabolism; glutathione metabolism. Inhibited by serine-borate. In terms of biological role, cleaves the gamma-glutamyl bond of extracellular glutathione tripeptide (gamma-Glu-Cys-Gly) and certain glutathione conjugates. Hydrolyzes glutathione releasing L-Glu and Cys-Gly dipeptide which is further metabolized to maintain extracellular cysteine levels but also to provide cysteine necessary for intracellular glutathione synthesis. Among glutathione-S-conjugates metabolizes leukotriene C4 (LTC4) and S-geranylgeranyl-glutathione (GGG), but is inactive toward gamma-glutamyl leucine. Converts extracellular LTC4 to LTD4 during acute inflammatory response. Acts as a negative regulator of GGG bioactivity. GGT5 (via GGG catabolism) and ABCC1 (via extracellular transport) establish GGG gradients within lymphoid tissues to position P2RY8-positive lymphocytes at germinal centers in lymphoid follicles and restrict their chemotactic transmigration from blood vessels to bone marrow parenchyma. The transpeptidation reaction, i.e. the transfer of gamma-glutamyl moiety to an acceptor molecule to yield a new gamma-glutamyl compound requires high concentration of dipeptide acceptor and is considered nonphysiological. The sequence is that of Glutathione hydrolase 5 proenzyme (Ggt5) from Mus musculus (Mouse).